A 189-amino-acid chain; its full sequence is dCTP deaminase (189 aa).

DCTP is bound by residues 112–117 (KSTYAR), 136–138 (TLE), Gln157, Tyr171, and Gln181. Glu138 serves as the catalytic Proton donor/acceptor.

This sequence belongs to the dCTP deaminase family. In terms of assembly, homotrimer.

It catalyses the reaction dCTP + H2O + H(+) = dUTP + NH4(+). It functions in the pathway pyrimidine metabolism; dUMP biosynthesis; dUMP from dCTP (dUTP route): step 1/2. Catalyzes the deamination of dCTP to dUTP. The polypeptide is dCTP deaminase (Acinetobacter baumannii (strain SDF)).